The chain runs to 96 residues: MAEVEETLKRLQSQKGVQGIIVVNTEGIPIKSTMDNPTTTQYASLMHSFILKARSTVRDIDPQNDLTFLRIRSKKNEIMVAPDKDYFLIVIQNPTE.

Residue alanine 2 is modified to N-acetylalanine.

This sequence belongs to the GAMAD family. As to quaternary structure, homodimer. The cytoplasmic dynein 1 complex consists of two catalytic heavy chains (HCs) and a number of non-catalytic subunits presented by intermediate chains (ICs), light intermediate chains (LICs) and light chains (LCs); the composition seems to vary in respect to the IC, LIC and LC composition. The heavy chain homodimer serves as a scaffold for the probable homodimeric assembly of the respective non-catalytic subunits. The ICs and LICs bind directly to the HC dimer and the LCs assemble on the IC dimer. Interacts with DYNLRB2. Interacts with DYNC1I1 and DYNC1I2. Interacts with RAB6A isoform 1 (GTP-bound); the interaction is direct. Interacts with RAB6A isoform 2 (GDP-bound); the interaction is direct. Interacts with RAB6B (GDP-bound). As to expression, high expression in heart, liver, brain and pancreas; moderate in placenta, skeletal muscle and kidney; low in lung, prostate, testis, small intestine and colon. Isoform 1 expression is up-regulated in 64% hepatocellular carcinoma (HCC) patients.

It is found in the cytoplasm. It localises to the cytoskeleton. Acts as one of several non-catalytic accessory components of the cytoplasmic dynein 1 complex that are thought to be involved in linking dynein to cargos and to adapter proteins that regulate dynein function. Cytoplasmic dynein 1 acts as a motor for the intracellular retrograde motility of vesicles and organelles along microtubules. This chain is Dynein light chain roadblock-type 1, found in Homo sapiens (Human).